A 48-amino-acid polypeptide reads, in one-letter code: Protein YgdT (48 aa).

The chain is Protein YgdT (ygdT) from Escherichia coli (strain K12).